The sequence spans 334 residues: Methionine adenosyltransferase 2 subunit beta (334 aa).

Residues 37–40 (TGLL), 60–62 (FRR), 71–72 (NL), cysteine 93, arginine 97, tyrosine 159, and leucine 185 contribute to the NADP(+) site. A Phosphothreonine modification is found at threonine 309. The interval 319 to 334 (LWPFLIDKRWRQTVFH) is required for interaction with MAT2A.

Belongs to the dTDP-4-dehydrorhamnose reductase family. MAT2B subfamily. As to quaternary structure, heterotrimer; composed of a catalytic MAT2A homodimer that binds one regulatory MAT2B chain. Heterohexamer; composed of a central, catalytic MAT2A homotetramer flanked on either side by a regulatory MAT2B chain. NADP binding increases the affinity for MAT2A.

The protein operates within amino-acid biosynthesis; S-adenosyl-L-methionine biosynthesis; S-adenosyl-L-methionine from L-methionine: step 1/1. Functionally, regulatory subunit of S-adenosylmethionine synthetase 2, an enzyme that catalyzes the formation of S-adenosylmethionine from methionine and ATP. Regulates MAT2A catalytic activity by changing its kinetic properties, increasing its affinity for L-methionine. Can bind NADP (in vitro). The protein is Methionine adenosyltransferase 2 subunit beta (Mat2b) of Mus musculus (Mouse).